Consider the following 125-residue polypeptide: Small ribosomal subunit protein uS13 (125 aa).

The segment at 93–125 is disordered; the sequence is RAGLPVRGQRTRTNARTRRGARKTVAGKKKATR. The span at 101-125 shows a compositional bias: basic residues; the sequence is QRTRTNARTRRGARKTVAGKKKATR.

Belongs to the universal ribosomal protein uS13 family. Part of the 30S ribosomal subunit. Forms a loose heterodimer with protein S19. Forms two bridges to the 50S subunit in the 70S ribosome.

In terms of biological role, located at the top of the head of the 30S subunit, it contacts several helices of the 16S rRNA. In the 70S ribosome it contacts the 23S rRNA (bridge B1a) and protein L5 of the 50S subunit (bridge B1b), connecting the 2 subunits; these bridges are implicated in subunit movement. Contacts the tRNAs in the A and P-sites. This Synechococcus elongatus (strain ATCC 33912 / PCC 7942 / FACHB-805) (Anacystis nidulans R2) protein is Small ribosomal subunit protein uS13.